A 144-amino-acid polypeptide reads, in one-letter code: Large ribosomal subunit protein uL13 (144 aa).

The protein belongs to the universal ribosomal protein uL13 family. As to quaternary structure, part of the 50S ribosomal subunit.

In terms of biological role, this protein is one of the early assembly proteins of the 50S ribosomal subunit, although it is not seen to bind rRNA by itself. It is important during the early stages of 50S assembly. This Clostridium kluyveri (strain NBRC 12016) protein is Large ribosomal subunit protein uL13.